A 321-amino-acid polypeptide reads, in one-letter code: Transaldolase (321 aa).

The active-site Schiff-base intermediate with substrate is K132.

The protein belongs to the transaldolase family. Type 1 subfamily. As to quaternary structure, homodimer.

The protein localises to the cytoplasm. It catalyses the reaction D-sedoheptulose 7-phosphate + D-glyceraldehyde 3-phosphate = D-erythrose 4-phosphate + beta-D-fructose 6-phosphate. The protein operates within carbohydrate degradation; pentose phosphate pathway; D-glyceraldehyde 3-phosphate and beta-D-fructose 6-phosphate from D-ribose 5-phosphate and D-xylulose 5-phosphate (non-oxidative stage): step 2/3. Transaldolase is important for the balance of metabolites in the pentose-phosphate pathway. In Rhizobium etli (strain CIAT 652), this protein is Transaldolase.